A 1362-amino-acid polypeptide reads, in one-letter code: DNA-directed RNA polymerase subunit beta (1362 aa).

This sequence belongs to the RNA polymerase beta chain family. As to quaternary structure, the RNAP catalytic core consists of 2 alpha, 1 beta, 1 beta' and 1 omega subunit. When a sigma factor is associated with the core the holoenzyme is formed, which can initiate transcription.

The enzyme catalyses RNA(n) + a ribonucleoside 5'-triphosphate = RNA(n+1) + diphosphate. Functionally, DNA-dependent RNA polymerase catalyzes the transcription of DNA into RNA using the four ribonucleoside triphosphates as substrates. This chain is DNA-directed RNA polymerase subunit beta, found in Acinetobacter baylyi (strain ATCC 33305 / BD413 / ADP1).